The primary structure comprises 503 residues: MTAVDAPDLLDYDDVLAKYEPVLGMEVHVELGTETKMFCPCPTEFGAEPNTQVCPVCLGLPGSLPVVNEAAVESAIRIGLALNCSITPWGRFARKNYFYPDQPKNYQISQYDEPIATDGHLDVVLDDGTTWRVEIERAHMEEDTGKSLHVGGATGRIHGASHSLLDYNRAGVPLVEIVTKTISGAGARAPEVARAYVTALRDLLKSLNVSDVRMDQGSMRCDANVSLMPIGATELGTRTETKNVNSLKSVEVAVRYEMRRQAAVLEAGGEVIQETRHFQEADGTTSPGRRKETAEDYRYFPEPDLEPVAPSAEWIEELRGTLPELPWVRRARIQADWGVSDEVMRDLVNAGALDLVIATVEAGASPEAARSWWVSYLAQQANTRGVELAELPITPAQVAQVVALIDSGKLNNKVARQVVDHVLEGEGDPEQVVANHPELVVERDDTKLKAAVEEALAANPDIAEKIRGGKVAAAGKIVGDVMKATRGQADPARVKELVIEACG.

It belongs to the GatB/GatE family. GatB subfamily. Heterotrimer of A, B and C subunits.

It carries out the reaction L-glutamyl-tRNA(Gln) + L-glutamine + ATP + H2O = L-glutaminyl-tRNA(Gln) + L-glutamate + ADP + phosphate + H(+). The catalysed reaction is L-aspartyl-tRNA(Asn) + L-glutamine + ATP + H2O = L-asparaginyl-tRNA(Asn) + L-glutamate + ADP + phosphate + 2 H(+). Allows the formation of correctly charged Asn-tRNA(Asn) or Gln-tRNA(Gln) through the transamidation of misacylated Asp-tRNA(Asn) or Glu-tRNA(Gln) in organisms which lack either or both of asparaginyl-tRNA or glutaminyl-tRNA synthetases. The reaction takes place in the presence of glutamine and ATP through an activated phospho-Asp-tRNA(Asn) or phospho-Glu-tRNA(Gln). The protein is Aspartyl/glutamyl-tRNA(Asn/Gln) amidotransferase subunit B of Rhodococcus jostii (strain RHA1).